Consider the following 179-residue polypeptide: MVVLDKKLLERLTSRKVPLEELEDMEKRCFLSTFTYQDAFDLGTYIRNAVKENFPEKPVAIDISLPNGHCLFRTVTYGGSALDNDFWIQRKKKTALRFGHSSFYMGCKKGDKTPEEKFFVDSKEYAFHGGAVLIQSERSDYPYACLTISGLKQEEDHLMAVSSLIAFANESLEEDLNLD.

Belongs to the UPF0303 family.

The protein resides in the cytoplasm. The protein is UPF0303 protein YBR137W of Saccharomyces cerevisiae (strain ATCC 204508 / S288c) (Baker's yeast).